Reading from the N-terminus, the 264-residue chain is Proteasome assembly chaperone 2 (264 aa).

Thr-137 is subject to Phosphothreonine.

Belongs to the PSMG2 family. Forms a heterodimer with PSMG1. The PSMG1-PSMG2 heterodimer interacts directly with the PSMA5 and PSMA7 proteasome alpha subunits. Degraded by the proteasome upon completion of 20S proteasome maturation.

It localises to the nucleus. In terms of biological role, chaperone protein which promotes assembly of the 20S proteasome as part of a heterodimer with PSMG1. The PSMG1-PSMG2 heterodimer binds to the PSMA5 and PSMA7 proteasome subunits, promotes assembly of the proteasome alpha subunits into the heteroheptameric alpha ring and prevents alpha ring dimerization. The sequence is that of Proteasome assembly chaperone 2 from Bos taurus (Bovine).